The primary structure comprises 381 residues: Cyclin-dependent kinase inhibitor CIP1 (381 aa).

A compositionally biased stretch (basic residues) spans 1-11; it reads MLLERLHKRLH. The tract at residues 1-30 is disordered; the sequence is MLLERLHKRLHAGSSRRSQENKDKNCKPED. Over residues 17–30 the composition is skewed to basic and acidic residues; sequence RSQENKDKNCKPED. 3 positions are modified to phosphothreonine: Thr-65, Thr-69, and Thr-73.

As to quaternary structure, interact with the CDC28/CLN2 complex. Phosphorylated during S phase in a CDC28-dependent manner. Phosphorylated at Thr-65 and Thr-73 by HOG1 under osmotic stress. The phosphorylations of Thr-65 and Thr-73 are necessary for CIP1-induced growth inhibition.

It localises to the cytoplasm. It is found in the nucleus. In terms of biological role, acts as an inhibitor of the CDC28/CLN2 cyclin-dependent kinase complex. Stabilizes the CDC28 inhibitor SIC1. Negatively regulates the G1/S phase transition. Contributes to osmostress-induced transitory G1 delay. The chain is Cyclin-dependent kinase inhibitor CIP1 from Saccharomyces cerevisiae (strain ATCC 204508 / S288c) (Baker's yeast).